The primary structure comprises 189 residues: Interferon alpha-8 (189 aa).

The signal sequence occupies residues 1-23; the sequence is MALTFYLLVALVVLSYKSFSSLG. Disulfide bonds link Cys-24–Cys-122 and Cys-52–Cys-162.

This sequence belongs to the alpha/beta interferon family.

The protein resides in the secreted. In terms of biological role, produced by macrophages, IFN-alpha have antiviral activities. Interferon stimulates the production of two enzymes: a protein kinase and an oligoadenylate synthetase. This Homo sapiens (Human) protein is Interferon alpha-8 (IFNA8).